Consider the following 179-residue polypeptide: MRQGSIPGAHGRVRPLGLLGDPVLHARCAEVTDFGPELAALVEDLFATMYAAHGVGLAANQVGEAVRVFVYDCPDDEDERHLGHVVNPRLVETGGVVVRGPEGCLSLPGLEAGTERYDEAVVTGFTVAGEPVTVRGTGFFARCLQHECDHLEGRVYADRLTGRRHRKLMRQVARASWHR.

Residues Cys-104 and His-146 each contribute to the Fe cation site. Residue Glu-147 is part of the active site. Residue His-150 coordinates Fe cation.

It belongs to the polypeptide deformylase family. The cofactor is Fe(2+).

It carries out the reaction N-terminal N-formyl-L-methionyl-[peptide] + H2O = N-terminal L-methionyl-[peptide] + formate. In terms of biological role, removes the formyl group from the N-terminal Met of newly synthesized proteins. Requires at least a dipeptide for an efficient rate of reaction. N-terminal L-methionine is a prerequisite for activity but the enzyme has broad specificity at other positions. This chain is Peptide deformylase 2, found in Streptomyces coelicolor (strain ATCC BAA-471 / A3(2) / M145).